A 127-amino-acid chain; its full sequence is Large ribosomal subunit protein bL21 (127 aa).

This sequence belongs to the bacterial ribosomal protein bL21 family. Part of the 50S ribosomal subunit. Contacts protein L20.

Functionally, this protein binds to 23S rRNA in the presence of protein L20. The chain is Large ribosomal subunit protein bL21 from Blochmanniella floridana.